A 247-amino-acid chain; its full sequence is NH(3)-dependent NAD(+) synthetase (247 aa).

29 to 36 (GISGGIDS) provides a ligand contact to ATP. Asp35 is a binding site for Mg(2+). Arg120 contributes to the deamido-NAD(+) binding site. Thr140 is a binding site for ATP. Glu145 provides a ligand contact to Mg(2+). Deamido-NAD(+) is bound by residues Lys153 and Asp160. Residues Lys169 and Ser191 each coordinate ATP. 237-238 (HK) provides a ligand contact to deamido-NAD(+).

It belongs to the NAD synthetase family. As to quaternary structure, homodimer.

It carries out the reaction deamido-NAD(+) + NH4(+) + ATP = AMP + diphosphate + NAD(+) + H(+). It functions in the pathway cofactor biosynthesis; NAD(+) biosynthesis; NAD(+) from deamido-NAD(+) (ammonia route): step 1/1. In terms of biological role, catalyzes the ATP-dependent amidation of deamido-NAD to form NAD. Uses ammonia as a nitrogen source. This Alkaliphilus metalliredigens (strain QYMF) protein is NH(3)-dependent NAD(+) synthetase.